We begin with the raw amino-acid sequence, 217 residues long: 3,4-dihydroxy-2-butanone 4-phosphate synthase (217 aa).

Residues 37 to 38 (RE), D42, 150 to 154 (RRGHT), and E174 contribute to the D-ribulose 5-phosphate site. E38 provides a ligand contact to Mg(2+). H153 lines the Mg(2+) pocket.

Belongs to the DHBP synthase family. In terms of assembly, homodimer. It depends on Mg(2+) as a cofactor. Mn(2+) is required as a cofactor.

It carries out the reaction D-ribulose 5-phosphate = (2S)-2-hydroxy-3-oxobutyl phosphate + formate + H(+). The protein operates within cofactor biosynthesis; riboflavin biosynthesis; 2-hydroxy-3-oxobutyl phosphate from D-ribulose 5-phosphate: step 1/1. Catalyzes the conversion of D-ribulose 5-phosphate to formate and 3,4-dihydroxy-2-butanone 4-phosphate. The sequence is that of 3,4-dihydroxy-2-butanone 4-phosphate synthase from Shewanella woodyi (strain ATCC 51908 / MS32).